Consider the following 226-residue polypeptide: ATP synthase F(0) complex subunit a (226 aa).

A run of 6 helical transmembrane segments spans residues 12 to 32 (PTMM…ILFP), 68 to 88 (WTLM…LGLL), 97 to 117 (QLSM…FMGF), 135 to 155 (IFLI…QPMA), 164 to 184 (ITAG…LMDI), and 189 to 209 (ALIT…VAMI).

Belongs to the ATPase A chain family. As to quaternary structure, component of the ATP synthase complex composed at least of ATP5F1A/subunit alpha, ATP5F1B/subunit beta, ATP5MC1/subunit c (homooctomer), MT-ATP6/subunit a, MT-ATP8/subunit 8, ATP5ME/subunit e, ATP5MF/subunit f, ATP5MG/subunit g, ATP5MK/subunit k, ATP5MJ/subunit j, ATP5F1C/subunit gamma, ATP5F1D/subunit delta, ATP5F1E/subunit epsilon, ATP5PF/subunit F6, ATP5PB/subunit b, ATP5PD/subunit d, ATP5PO/subunit OSCP. ATP synthase complex consists of a soluble F(1) head domain (subunits alpha(3) and beta(3)) - the catalytic core - and a membrane F(0) domain - the membrane proton channel (subunits c, a, 8, e, f, g, k and j). These two domains are linked by a central stalk (subunits gamma, delta, and epsilon) rotating inside the F1 region and a stationary peripheral stalk (subunits F6, b, d, and OSCP). Interacts with DNAJC30; interaction is direct.

The protein localises to the mitochondrion inner membrane. The enzyme catalyses H(+)(in) = H(+)(out). In terms of biological role, subunit a, of the mitochondrial membrane ATP synthase complex (F(1)F(0) ATP synthase or Complex V) that produces ATP from ADP in the presence of a proton gradient across the membrane which is generated by electron transport complexes of the respiratory chain. ATP synthase complex consist of a soluble F(1) head domain - the catalytic core - and a membrane F(1) domain - the membrane proton channel. These two domains are linked by a central stalk rotating inside the F(1) region and a stationary peripheral stalk. During catalysis, ATP synthesis in the catalytic domain of F(1) is coupled via a rotary mechanism of the central stalk subunits to proton translocation. With the subunit c (ATP5MC1), forms the proton-conducting channel in the F(0) domain, that contains two crucial half-channels (inlet and outlet) that facilitate proton movement from the mitochondrial intermembrane space (IMS) into the matrix. Protons are taken up via the inlet half-channel and released through the outlet half-channel, following a Grotthuss mechanism. The chain is ATP synthase F(0) complex subunit a from Equus asinus (Donkey).